Consider the following 207-residue polypeptide: Outer-membrane lipoprotein carrier protein (207 aa).

Residues 1–21 (MRAIRMLLVSALALGTVTAYA) form the signal peptide.

Belongs to the LolA family. Monomer.

It localises to the periplasm. In terms of biological role, participates in the translocation of lipoproteins from the inner membrane to the outer membrane. Only forms a complex with a lipoprotein if the residue after the N-terminal Cys is not an aspartate (The Asp acts as a targeting signal to indicate that the lipoprotein should stay in the inner membrane). The sequence is that of Outer-membrane lipoprotein carrier protein from Pseudomonas putida (strain GB-1).